Here is a 677-residue protein sequence, read N- to C-terminus: Collagen alpha-2(IX) chain (677 aa).

Residues 1 to 21 form the signal peptide; it reads MAHRSPALCLLLLHAACLCLA. Positions 25–161 are triple-helical region 4 (COL4); it reads GPPGEPGPRG…PGKPGPPGHI (137 aa). Over residues 28-41 the composition is skewed to pro residues; that stretch reads GEPGPRGPPGPPGV. The interval 28 to 516 is disordered; it reads GEPGPRGPPG…MPGQRGVAGR (489 aa). Positions 53 to 66 are enriched in low complexity; that stretch reads SPGAPGSPGAKGEP. Residues 68–77 show a composition bias toward pro residues; the sequence is APGPDGPPGK. Positions 91–100 are enriched in gly residues; sequence GPWGGQGLKG. Composition is skewed to pro residues over residues 104–121 and 137–158; these read LPGP…PPGL and KGDP…PGPP. Pro-158 carries the post-translational modification 4-hydroxyproline. The interval 162–178 is nonhelical region 4 (NC4); the sequence is QGVEGSADFLCPTNCPP. O-linked (Xyl...) (glycosaminoglycan) serine glycosylation occurs at Ser-167. Pro-178 is modified (4-hydroxyproline). Residues 179–517 are triple-helical region 3 (COL3); the sequence is GPKGPQGLQG…PGQRGVAGRD (339 aa). Lys-181 is modified (5-hydroxylysine). Lys-181 carries an O-linked (Gal...) hydroxylysine glycan. Residue Lys-190 is modified to Allysine. Low complexity-rich tracts occupy residues 363-382, 430-442, and 496-505; these read TPGL…AGVP, PGKT…TGDP, and RGLLGERGVP. The nonhelical region 3 (NC3) stretch occupies residues 518–547; the sequence is AGDQHIIDVVLKMMQEQLAEVAVSAKRAAL. Residues 548–630 are triple-helical region 2 (COL2); that stretch reads GGVGAMGPPG…PGLPGIPGHA (83 aa). Residues 550-657 form a disordered region; sequence VGAMGPPGPP…GRPGSPGPAG (108 aa). Residues 555–565 show a composition bias toward pro residues; sequence PPGPPGPPGPP. Positions 597–609 are enriched in basic and acidic residues; that stretch reads KRGEKGERGDTGR. The nonhelical region 2 (NC2) stretch occupies residues 631 to 632; sequence LA. The triple-helical region 1 (COL1) stretch occupies residues 633–662; it reads GKDGERGPPGVPGDAGRPGSPGPAGLPGFC. Residues 663–677 are nonhelical region 1 (NC1); it reads EPAACLGALPTPRHG.

The protein belongs to the fibril-associated collagens with interrupted helices (FACIT) family. In terms of assembly, heterotrimer of an alpha 1(IX), an alpha 2(IX) and an alpha 3(IX) chain. The chains are linked to each other by interchain disulfide bonds. Trimers are also cross-linked via hydroxylysines. Post-translationally, covalently linked to the telopeptides of type II collagen by lysine-derived cross-links. Prolines at the third position of the tripeptide repeating unit (G-X-Y) are hydroxylated in some or all of the chains.

Its subcellular location is the secreted. The protein localises to the extracellular space. It is found in the extracellular matrix. In terms of biological role, structural component of hyaline cartilage and vitreous of the eye. The polypeptide is Collagen alpha-2(IX) chain (COL9A2) (Gallus gallus (Chicken)).